A 395-amino-acid polypeptide reads, in one-letter code: S-adenosylmethionine synthase 3 (395 aa).

A Mg(2+)-binding site is contributed by Glu10. His16 contacts ATP. Glu44 lines the K(+) pocket. L-methionine is bound by residues Glu57 and Gln100. ATP-binding positions include 168-170, 236-239, Asp247, 253-254, Ala270, Lys274, and Lys278; these read DGK, SGRF, and RK. Asp247 lines the L-methionine pocket. Residue Lys278 participates in L-methionine binding.

Belongs to the AdoMet synthase family. As to quaternary structure, homotetramer. Requires Mn(2+) as cofactor. Mg(2+) is required as a cofactor. Co(2+) serves as cofactor. It depends on K(+) as a cofactor.

The protein resides in the cytoplasm. It carries out the reaction L-methionine + ATP + H2O = S-adenosyl-L-methionine + phosphate + diphosphate. The protein operates within amino-acid biosynthesis; S-adenosyl-L-methionine biosynthesis; S-adenosyl-L-methionine from L-methionine: step 1/1. Functionally, catalyzes the formation of S-adenosylmethionine from methionine and ATP. The reaction comprises two steps that are both catalyzed by the same enzyme: formation of S-adenosylmethionine (AdoMet) and triphosphate, and subsequent hydrolysis of the triphosphate. This Populus trichocarpa (Western balsam poplar) protein is S-adenosylmethionine synthase 3 (METK3).